The chain runs to 101 residues: STAS-domain containing protein PA14_20770 (101 aa).

The STAS domain maps to 14–101; the sequence is LTIQIQGRFD…SNFEQLFKIS (88 aa).

Phosphorylated on a serine residue, possibly on Ser-56.

It localises to the secreted. The sequence is that of STAS-domain containing protein PA14_20770 from Pseudomonas aeruginosa (strain UCBPP-PA14).